Here is a 150-residue protein sequence, read N- to C-terminus: Large ribosomal subunit protein bL9 (150 aa).

Belongs to the bacterial ribosomal protein bL9 family.

Functionally, binds to the 23S rRNA. This Streptococcus equi subsp. equi (strain 4047) protein is Large ribosomal subunit protein bL9.